The chain runs to 71 residues: Protein YqgC (71 aa).

This chain is Protein YqgC (yqgC), found in Escherichia coli (strain K12).